The following is a 402-amino-acid chain: Phosphoglycerate kinase (402 aa).

Substrate contacts are provided by residues 24–26, Arg-39, 62–65, Arg-121, and Arg-161; these read DLN and HLGR. ATP-binding positions include Lys-211, Gly-299, Glu-330, and 359–362; that span reads GGDS.

Belongs to the phosphoglycerate kinase family. As to quaternary structure, monomer.

The protein localises to the cytoplasm. The catalysed reaction is (2R)-3-phosphoglycerate + ATP = (2R)-3-phospho-glyceroyl phosphate + ADP. Its pathway is carbohydrate degradation; glycolysis; pyruvate from D-glyceraldehyde 3-phosphate: step 2/5. In Corynebacterium urealyticum (strain ATCC 43042 / DSM 7109), this protein is Phosphoglycerate kinase.